Consider the following 268-residue polypeptide: 2,5-diamino-6-ribosylamino-4(3H)-pyrimidinone 5'-phosphate reductase (268 aa).

NADP(+) contacts are provided by residues threonine 68, aspartate 72, 103 to 106, and 191 to 195; these read SNLR and GAELL.

The protein belongs to the HTP reductase family. In terms of assembly, homodimer.

The catalysed reaction is 2,5-diamino-6-(1-D-ribitylamino)pyrimidin-4(3H)-one 5'-phosphate + NADP(+) = 2,5-diamino-6-(1-D-ribosylamino)pyrimidin-4(3H)-one 5'-phosphate + NADPH + H(+). It catalyses the reaction 2,5-diamino-6-(1-D-ribitylamino)pyrimidin-4(3H)-one 5'-phosphate + NAD(+) = 2,5-diamino-6-(1-D-ribosylamino)pyrimidin-4(3H)-one 5'-phosphate + NADH + H(+). The protein operates within cofactor biosynthesis; riboflavin biosynthesis. Functionally, catalyzes an early step in riboflavin biosynthesis, the NADPH-dependent reduction of the ribose side chain of 2,5-diamino-6-ribosylamino-4(3H)-pyrimidinone 5'-phosphate, yielding 2,5-diamino-6-ribitylamino-4(3H)-pyrimidinone 5'-phosphate. This chain is 2,5-diamino-6-ribosylamino-4(3H)-pyrimidinone 5'-phosphate reductase, found in Schizosaccharomyces pombe (strain 972 / ATCC 24843) (Fission yeast).